The chain runs to 1067 residues: Receptor-type guanylate cyclase gcy-10 (1067 aa).

The signal sequence occupies residues 1–20; sequence MLKSLLIIVIVFLHRELCDG. Residues 21–438 are Extracellular-facing; the sequence is IQLILFDNWP…CVAKSSCVNY (418 aa). N-linked (GlcNAc...) asparagine glycosylation occurs at N411. The chain crosses the membrane as a helical span at residues 439-459; it reads IPHIIAAVVIVTIIVIAIVII. The Cytoplasmic portion of the chain corresponds to 460-1067; it reads VKQRRHKLNI…RGSIVPLQKA (608 aa). One can recognise a Protein kinase domain in the interval 509–791; the sequence is ALTSRRRVFG…ESISTVYPLS (283 aa). ATP-binding positions include 515–523 and K534; that span reads RVFGSYALV. Residues 859–989 enclose the Guanylate cyclase domain; sequence TVMFVQICDF…DTVNFASRMQ (131 aa).

This sequence belongs to the adenylyl cyclase class-4/guanylyl cyclase family. As to expression, expressed predominantly in AWC but also in AWB, ASI, ASJ and ASK sensory neurons and in I1 interneuron.

Its subcellular location is the cell membrane. The protein localises to the cell projection. It localises to the cilium. It carries out the reaction GTP = 3',5'-cyclic GMP + diphosphate. Functionally, guanylate cyclase involved in the production of the second messenger cGMP. Regulates chemotaxis responses toward volatile odorants in AWC sensory neurons and their avoidance in AWB sensory neurons. May be involved in sensitivity to quinine by regulating egl-4 activity through the production of cGMP. Involved in phototransduction in ASJ neurons downstream of G protein coupled-photoreceptor lite-1. Required to maintain the expression of putative olfactory receptor str-2 in AWC neurons in adults. In AWB and AWC sensory neurons, mediates the recognition of food oders which subsequently allows for the detection of preferred food sources. Involved in AWB sensory neuron development and extension during postembryonic development, potentially via mediating localization of tub-1 and PI(4,5)P2 to membrane cilia. In Caenorhabditis elegans, this protein is Receptor-type guanylate cyclase gcy-10.